The chain runs to 843 residues: Proto-oncogene vav (843 aa).

Positions 1 to 119 (MELWRQCTHW…YTLSALSWTP (119 aa)) constitute a Calponin-homology (CH) domain. The DH domain occupies 194–373 (KRCCCLREIQ…RDLAQCVNEV (180 aa)). A PH domain is found at 402 to 504 (RPKIDGELKI…WMEQFEMAIS (103 aa)). The Phorbol-ester/DAG-type zinc-finger motif lies at 515–564 (GHDFQMFSFEETTSCKACQMLLRGTFYQGYRCYRCRAPAHKECLGRVPPC). One can recognise an SH3 1 domain in the interval 590–658 (LGLPKMEVCQ…PCNRVRPYVH (69 aa)). The SH2 domain maps to 669–763 (WYAGPMERAG…SLDTTLQFPY (95 aa)). The SH3 2 domain maps to 780–840 (KYFGTAKARY…PSNYVEEDYS (61 aa)). Phosphotyrosine is present on residues Y824 and Y842.

Interacts with SHB. Interacts with APS, DOCK2, GRB2, GRB3, DOCK2, SLA, TEC and ZNF655/VIK. Interacts with SIAH2; without leading to its degradation. Associates with BLNK, PLCG1, GRB2 and NCK1 in a B-cell antigen receptor-dependent fashion. Interacts with CBLB; which inhibits tyrosine phosphorylation and down-regulates activity. May interact with CCPG1. Interacts with CLNK. Interacts with THEMIS2. Interacts with NEK3 and this interaction is prolactin-dependent. Interacts with ITK. Interacts with PTK2B/PYK2. Interacts with HCK. Interacts with PTK2B/PYK2. Interacts (via SH2 domain) with SYK. Interacts with ANKRD54. Interacts with CD6. Interacts with LCP2; this interaction plays a role in TCR-mediated cytokine production. Phosphorylated by FYN. Phosphorylated on tyrosine residues by HCK in response to IFNG and bacterial lipopolysaccharide (LPS).

Couples tyrosine kinase signals with the activation of the Rho/Rac GTPases, thus leading to cell differentiation and/or proliferation. This Rattus norvegicus (Rat) protein is Proto-oncogene vav (Vav1).